A 1199-amino-acid polypeptide reads, in one-letter code: DNA-directed RNA polymerase subunit beta' (1199 aa).

Zn(2+) is bound by residues cysteine 60, cysteine 62, cysteine 75, and cysteine 78. Mg(2+)-binding residues include aspartate 449, aspartate 451, and aspartate 453. Zn(2+)-binding residues include cysteine 818, cysteine 892, cysteine 899, and cysteine 902.

This sequence belongs to the RNA polymerase beta' chain family. As to quaternary structure, the RNAP catalytic core consists of 2 alpha, 1 beta, 1 beta' and 1 omega subunit. When a sigma factor is associated with the core the holoenzyme is formed, which can initiate transcription. It depends on Mg(2+) as a cofactor. Requires Zn(2+) as cofactor.

It carries out the reaction RNA(n) + a ribonucleoside 5'-triphosphate = RNA(n+1) + diphosphate. DNA-dependent RNA polymerase catalyzes the transcription of DNA into RNA using the four ribonucleoside triphosphates as substrates. The protein is DNA-directed RNA polymerase subunit beta' of Bacillus velezensis (strain DSM 23117 / BGSC 10A6 / LMG 26770 / FZB42) (Bacillus amyloliquefaciens subsp. plantarum).